The primary structure comprises 241 residues: MAMRRFDPRQAQRGPQIRINQRIRVPEIRVIGDDGEMLGIMQTHEALRRAQEKGLDLVEVNPKADPPVCKILDFGKYKYDEKKKAREAKRKQSVVEIKEIKLRPKTDDHDLEFKTRAAHRFLGAGHKVKFTVRFRGREITHPEKAQEQLDWIVQHCEEIANVEVRPMMEQRTMTLMMAPKPAILQKVAQARAAAEKARQKAIQEGRAAPAQDDTEDEEIEKLERELEEQDDEDDDEAEATE.

A compositionally biased stretch (basic and acidic residues) spans 193–203 (AAEKARQKAIQ). A disordered region spans residues 193 to 241 (AAEKARQKAIQEGRAAPAQDDTEDEEIEKLERELEEQDDEDDDEAEATE). Residues 212–241 (DDTEDEEIEKLERELEEQDDEDDDEAEATE) are compositionally biased toward acidic residues.

Belongs to the IF-3 family. Monomer.

It is found in the cytoplasm. Functionally, IF-3 binds to the 30S ribosomal subunit and shifts the equilibrium between 70S ribosomes and their 50S and 30S subunits in favor of the free subunits, thus enhancing the availability of 30S subunits on which protein synthesis initiation begins. This chain is Translation initiation factor IF-3, found in Sorangium cellulosum (strain So ce56) (Polyangium cellulosum (strain So ce56)).